The chain runs to 287 residues: tRNA N(3)-cytidine methyltransferase METTL6 (287 aa).

S-adenosyl-L-methionine is bound by residues Trp45, Tyr49, Gly87, Asp110, Asp136, Leu137, and Ile157. The tract at residues 267 to 287 (RKPPKDPAPTTDSASLLRKEF) is disordered.

It belongs to the methyltransferase superfamily. METL family. As to quaternary structure, monomer. Interacts with SARS1/SerRS; interaction is mediated via tRNA(Ser) and is required for N(3)-methylcytidine methylation.

The protein localises to the cytoplasm. It localises to the nucleus. The enzyme catalyses cytidine(32) in tRNA(Ser) + S-adenosyl-L-methionine = N(3)-methylcytidine(32) in tRNA(Ser) + S-adenosyl-L-homocysteine + H(+). Functionally, S-adenosyl-L-methionine-dependent methyltransferase that mediates N(3)-methylcytidine modification of residue 32 of the tRNA anticodon loop of tRNA(Ser), including tRNA(Ser)(UGA) and tRNA(Ser)(GCU). Interaction with SARS1/SerRS is required for N(3)-methylcytidine methylation. This is tRNA N(3)-cytidine methyltransferase METTL6 (Mettl6) from Rattus norvegicus (Rat).